We begin with the raw amino-acid sequence, 343 residues long: L-threonine 3-dehydrogenase (343 aa).

Residue C40 participates in Zn(2+) binding. Catalysis depends on charge relay system residues T42 and H45. 6 residues coordinate Zn(2+): H65, E66, C95, C98, C101, and C109. Residues I177, D197, R202, L264–I266, and I288–Y289 each bind NAD(+).

The protein belongs to the zinc-containing alcohol dehydrogenase family. In terms of assembly, homotetramer. Requires Zn(2+) as cofactor.

The protein localises to the cytoplasm. The enzyme catalyses L-threonine + NAD(+) = (2S)-2-amino-3-oxobutanoate + NADH + H(+). Its pathway is amino-acid degradation; L-threonine degradation via oxydo-reductase pathway; glycine from L-threonine: step 1/2. Catalyzes the NAD(+)-dependent oxidation of L-threonine to 2-amino-3-ketobutyrate. This Vibrio vulnificus (strain CMCP6) protein is L-threonine 3-dehydrogenase.